Consider the following 430-residue polypeptide: Glutamyl-tRNA reductase 1 (430 aa).

Substrate contacts are provided by residues 49-52 (TCNR), Ser109, 114-116 (EGQ), and Gln120. The active-site Nucleophile is the Cys50. 189 to 194 (GAGSMA) serves as a coordination point for NADP(+).

This sequence belongs to the glutamyl-tRNA reductase family. Homodimer.

The enzyme catalyses (S)-4-amino-5-oxopentanoate + tRNA(Glu) + NADP(+) = L-glutamyl-tRNA(Glu) + NADPH + H(+). The protein operates within porphyrin-containing compound metabolism; protoporphyrin-IX biosynthesis; 5-aminolevulinate from L-glutamyl-tRNA(Glu): step 1/2. Its function is as follows. Catalyzes the NADPH-dependent reduction of glutamyl-tRNA(Glu) to glutamate 1-semialdehyde (GSA). This Nocardioides sp. (strain ATCC BAA-499 / JS614) protein is Glutamyl-tRNA reductase 1.